Consider the following 396-residue polypeptide: Na(+)/H(+) antiporter NhaA (396 aa).

The next 11 membrane-spanning stretches (helical) occupy residues 17–37 (FSGLLLILFCFLAIFISNTNF), 59–79 (FSLTNIVNDILMTFFFLEIGI), 97–117 (ILPGIAAIGGMIFPALIYNFI), 127–147 (GWAITVATDIAFAVGVLKILG), 156–176 (IFLLSLAIFDDIGAILIIAFF), 181–201 (IDQYMILLSTLVILTILSINY), 206–226 (CIYIYIIFGILLWESIFLSGI), 260–280 (SLSFLNKYFILPIFAFFNSGI), 292–312 (LLPFGIFFGLVLGKPIGVFLF), 333–353 (IAGISFLCGIGFTMSIFISNL), and 368–388 (FSILISSIVSSVIGFLFLYFL).

It belongs to the NhaA Na(+)/H(+) (TC 2.A.33) antiporter family.

The protein localises to the cell membrane. It catalyses the reaction Na(+)(in) + 2 H(+)(out) = Na(+)(out) + 2 H(+)(in). In terms of biological role, na(+)/H(+) antiporter that extrudes sodium in exchange for external protons. The sequence is that of Na(+)/H(+) antiporter NhaA from Wigglesworthia glossinidia brevipalpis.